Consider the following 209-residue polypeptide: PF03932 family protein CutC (209 aa).

The protein localises to the cytoplasm. This chain is PF03932 family protein CutC, found in Streptococcus pyogenes serotype M6 (strain ATCC BAA-946 / MGAS10394).